Here is a 286-residue protein sequence, read N- to C-terminus: tRNA(Ile)-lysidine synthase (286 aa).

7 to 12 (SGGPDS) contributes to the ATP binding site.

Belongs to the tRNA(Ile)-lysidine synthase family.

The protein localises to the cytoplasm. It catalyses the reaction cytidine(34) in tRNA(Ile2) + L-lysine + ATP = lysidine(34) in tRNA(Ile2) + AMP + diphosphate + H(+). In terms of biological role, ligates lysine onto the cytidine present at position 34 of the AUA codon-specific tRNA(Ile) that contains the anticodon CAU, in an ATP-dependent manner. Cytidine is converted to lysidine, thus changing the amino acid specificity of the tRNA from methionine to isoleucine. This is tRNA(Ile)-lysidine synthase from Mycoplasmopsis pulmonis (strain UAB CTIP) (Mycoplasma pulmonis).